Consider the following 229-residue polypeptide: Sodium channel modifier 1 (229 aa).

Ser-2 carries the post-translational modification Phosphoserine. A Bipartite nuclear localization signal motif is present at residues 4–20 (KREGDDWSQLNVLKKRR). The segment at 42–74 (FACAICPHRPVLDTLAMLTAHRAGKKHLSSLKL) adopts a Matrin-type zinc-finger fold. A Glycyl lysine isopeptide (Lys-Gly) (interchain with G-Cter in SUMO2) cross-link involves residue Lys-67. Disordered stretches follow at residues 80–105 (QTGK…EAPL) and 128–187 (RRKH…TKRR). A compositionally biased stretch (polar residues) spans 82-92 (GKGTEQNPRQQ). Basic and acidic residues predominate over residues 157 to 171 (ISKEPEPRERSDAKE). Ser-182 and Ser-218 each carry phosphoserine. Residues 187-229 (RVLNHYLTLRSSGWVPDGRGRWIKDENVEFDSDEEEPPDLPLD) form a required for interaction with LUC7L2 region.

Component of the minor spliceosome. Within this complex, interacts with RNF113A, as well as with SF3B1/SF3b155, SF3B2/SF3b145, SF3B3/SF3b130 and CDC5L. May interact with LUC7L2 and SNRNP70.

It is found in the nucleus. Its subcellular location is the nucleoplasm. The protein localises to the nucleus speckle. As a component of the minor spliceosome, involved in the splicing of U12-type introns in pre-mRNAs. Plays a role in the regulation of primary cilia length and Hedgehog signaling. The polypeptide is Sodium channel modifier 1 (Scnm1) (Mus musculus (Mouse)).